Reading from the N-terminus, the 1017-residue chain is Adhesion G-protein coupled receptor G2 (1017 aa).

Positions 1-37 (MVFSVRQCGHVGRTEEVLLTFKIFLVIICLHVVLVTS) are cleaved as a signal peptide. Over 38-627 (LEEDTDNSSL…TSVLPAQMMA (590 aa)) the chain is Extracellular. N-linked (GlcNAc...) asparagine glycans are attached at residues N44, N85, N99, N111, N117, N144, N162, N186, and N194. The disordered stretch occupies residues 301–366 (PLSPQPSAPI…NTTSAPPVQT (66 aa)). The segment covering 308 to 320 (APIASSPAIDMPP) has biased composition (low complexity). Composition is skewed to polar residues over residues 321 to 335 (QSET…THVS) and 344 to 366 (SFSS…PVQT). N-linked (GlcNAc...) asparagine glycosylation is found at N357, N370, N435, N438, N456, N461, N528, N542, N547, N551, and N597. Residues 462 to 619 (TTTFVAQDPA…GVLLDLSRTS (158 aa)) form the GAIN-B domain. 2 disulfides stabilise this stretch: C570-C601 and C589-C603. The segment at 570–619 (CVFWDLGRNGGRGGWSDNGCSVKDRRLNETICTCSHLTSFGVLLDLSRTS) is GPS. A stachel region spans residues 608–619 (SFGVLLDLSRTS). The helical transmembrane segment at 628–648 (LTFITYIGCGLSSIFLSVTLV) threads the bilayer. Residues 649 to 667 (TYIAFEKIRRDYPSKILIQ) are Cytoplasmic-facing. A helical transmembrane segment spans residues 668–688 (LCAALLLLNLVFLLDSWIALY). At 689–693 (KMQGL) the chain is on the extracellular side. Residues 694-714 (CISVAVFLHYFLLVSFTWMGL) traverse the membrane as a helical segment. A disulfide bond links C694 and C778. The Cytoplasmic segment spans residues 715–737 (EAFHMYLALVKVFNTYIRKYILK). The chain crosses the membrane as a helical span at residues 738-758 (FCIVGWGVPAVVVTIILTISP). At 759–789 (DNYGLGSYGKFPNGSPDDFCWINNNAVFYIT) the chain is on the extracellular side. The helical transmembrane segment at 790 to 810 (VVGYFCVIFLLNVSMFIVVLV) threads the bilayer. At 811 to 834 (QLCRIKKKKQLGAQRKTSIQDLRS) the chain is on the cytoplasmic side. The chain crosses the membrane as a helical span at residues 835–855 (IAGLTFLLGITWGFAFFAWGP). Over 856–857 (VN) the chain is Extracellular. Residue N857 is glycosylated (N-linked (GlcNAc...) asparagine). A helical membrane pass occupies residues 858-878 (VTFMYLFAIFNTLQGFFIFIF). Residue N868 participates in 3beta-hydroxyandrost-5-en-17-one binding. At 879–1017 (YCVAKENVRK…RGSLHFIEQM (139 aa)) the chain is on the cytoplasmic side. The tract at residues 918–939 (QTVNQGVSSSSNSLQSSSNSTN) is disordered. S1010 is subject to Phosphoserine.

The protein belongs to the G-protein coupled receptor 2 family. Adhesion G-protein coupled receptor (ADGR) subfamily. Heterodimer of 2 chains generated by proteolytic processing; the large extracellular N-terminal fragment and the membrane-bound C-terminal fragment predominantly remain associated and non-covalently linked. Interacts with CFTR. In terms of processing, proteolytically cleaved into 2 subunits, an extracellular subunit and a seven-transmembrane subunit. Post-translationally, highly glycosylated. In terms of tissue distribution, epididymis-specific expression (at protein level). Both subunits are associated with apical membranes of efferent ductule and proximal epididymal duct epithelia. Mainly expressed in the nonciliated principal cells of the proximal excurrent ducts. Specifically over-expressed in Ewing sarcomas but also up-regulated in a number of carcinomas derived from prostate, kidney or lung.

It is found in the apical cell membrane. Forms a heterodimer of 2 chains generated by proteolytic processing that remain associated through non-covalent interactions mediated by the GAIN-B domain. In the inactivated receptor, the Stachel sequence (also named stalk) is embedded in the GAIN-B domain, where it adopts a beta-strand conformation. On activation, the Stachel moves into the 7 transmembrane region and adopts a twisted hook-shaped configuration that forms contacts within the receptor, leading to coupling of a G-alpha protein, which activates signaling. The cleaved GAIN-B and N-terminal domains can then dissociate from the rest of the receptor. Deoxycorticosterone (DOC) acts as an antagonist of ADGRG2. Functionally, adhesion G-protein coupled receptor (aGPCR) for steroid hormones, such as dehydroepiandrosterone (DHEA; also named 3beta-hydroxyandrost-5-en-17-one) and androstenedione. Involved in a signal transduction pathway controlling epididymal function and male fertility. Ligand binding causes a conformation change that triggers signaling via guanine nucleotide-binding proteins (G proteins) and modulates the activity of downstream effectors, such as adenylate cyclase. ADGRG2 is coupled to G(s) G proteins and mediates activation of adenylate cyclase activity. Also able to couple with G(q) G proteins in vitro. Together with CFTR, required to promote fluid reabsorption within efferent ductule. This Homo sapiens (Human) protein is Adhesion G-protein coupled receptor G2.